The primary structure comprises 202 residues: Putative transposon Tn552 DNA-invertase bin3 (202 aa).

Residues 1-143 (MIIGYARVSS…QGIQVAKEKG (143 aa)) enclose the Resolvase/invertase-type recombinase catalytic domain. S9 functions as the O-(5'-phospho-DNA)-serine intermediate in the catalytic mechanism.

This sequence belongs to the site-specific recombinase resolvase family.

In terms of biological role, potential DNA invertase. The protein is Putative transposon Tn552 DNA-invertase bin3 (bin3) of Staphylococcus aureus.